The primary structure comprises 285 residues: Acetyl-coenzyme A carboxylase carboxyl transferase subunit beta (285 aa).

A CoA carboxyltransferase N-terminal domain is found at 29 to 285 (IMTKCPKCKK…ILKIHQEVTK (257 aa)). 4 residues coordinate Zn(2+): Cys-33, Cys-36, Cys-52, and Cys-55. Residues 33–55 (CPKCKKIMYTKELAENLNVCFNC) form a C4-type zinc finger.

It belongs to the AccD/PCCB family. As to quaternary structure, acetyl-CoA carboxylase is a heterohexamer composed of biotin carboxyl carrier protein (AccB), biotin carboxylase (AccC) and two subunits each of ACCase subunit alpha (AccA) and ACCase subunit beta (AccD). Requires Zn(2+) as cofactor.

The protein resides in the cytoplasm. The enzyme catalyses N(6)-carboxybiotinyl-L-lysyl-[protein] + acetyl-CoA = N(6)-biotinyl-L-lysyl-[protein] + malonyl-CoA. The protein operates within lipid metabolism; malonyl-CoA biosynthesis; malonyl-CoA from acetyl-CoA: step 1/1. In terms of biological role, component of the acetyl coenzyme A carboxylase (ACC) complex. Biotin carboxylase (BC) catalyzes the carboxylation of biotin on its carrier protein (BCCP) and then the CO(2) group is transferred by the transcarboxylase to acetyl-CoA to form malonyl-CoA. This Staphylococcus aureus (strain Mu3 / ATCC 700698) protein is Acetyl-coenzyme A carboxylase carboxyl transferase subunit beta.